Consider the following 225-residue polypeptide: Small ribosomal subunit protein eS1 (225 aa).

Residues 206 to 216 (PVEEPAAEEVA) are compositionally biased toward acidic residues. A disordered region spans residues 206 to 225 (PVEEPAAEEVAEAPAAETQE).

It belongs to the eukaryotic ribosomal protein eS1 family.

The chain is Small ribosomal subunit protein eS1 from Methanococcus maripaludis (strain C5 / ATCC BAA-1333).